Reading from the N-terminus, the 182-residue chain is Inner membrane assembly complex subunit 17 (182 aa).

The N-terminal 45 residues, 1–45 (MLKRRSNALITLSRTKLFPITTVAYYHRRLLNQQRRAVSTSPKKE), are a transit peptide targeting the mitochondrion. The Mitochondrial matrix portion of the chain corresponds to 46 to 107 (IKSLEDLANL…EIPVKRFIRP (62 aa)). Residues 108-127 (LWMFILMGSSVYLLLHFSWW) form a helical membrane-spanning segment. Residues 128–158 (KLEHEERESQLKKEVEILEHQLNELIVQDKT) adopt a coiled-coil conformation. Residues 128–182 (KLEHEERESQLKKEVEILEHQLNELIVQDKTHNTSRGKGSNESTHMKPWYRRWFW) are Mitochondrial intermembrane-facing.

Belongs to the INA17 family. As to quaternary structure, component of the inner membrane assembly (INA) complex, composed of INA17 and INA22. Interacts with a subset of F(1)F(0)-ATP synthase subunits of the F(1)-domain and the peripheral stalk.

Its subcellular location is the mitochondrion inner membrane. In terms of biological role, component of the INA complex (INAC) that promotes the biogenesis of mitochondrial F(1)F(0)-ATP synthase. INAC facilitates the assembly of the peripheral stalk and promotes the assembly of the catalytic F(1)-domain with the membrane-embedded F(0)-domain. In Saccharomyces cerevisiae (strain RM11-1a) (Baker's yeast), this protein is Inner membrane assembly complex subunit 17.